The primary structure comprises 136 residues: MARKEFRYRGYTLEELQEMPLDDVIKLFPSRQRRSLKRGFLPRQKKVLEKIRKIKKEGKTEGRPPVIRTHCRDMIVLPEMVGMTFGIHNGKEFVEVKIQPEMIGCYFGEFAPTRKKVEHGDPGMGATRFSMFVPLK.

It belongs to the universal ribosomal protein uS19 family.

Its function is as follows. Protein S19 forms a complex with S13 that binds strongly to the 16S ribosomal RNA. This chain is Small ribosomal subunit protein uS19 (rps19), found in Methanothermobacter thermautotrophicus (strain ATCC 29096 / DSM 1053 / JCM 10044 / NBRC 100330 / Delta H) (Methanobacterium thermoautotrophicum).